The primary structure comprises 101 residues: Small ribosomal subunit protein bS18c (101 aa).

The protein belongs to the bacterial ribosomal protein bS18 family. In terms of assembly, part of the 30S ribosomal subunit.

The protein localises to the plastid. It localises to the chloroplast. The polypeptide is Small ribosomal subunit protein bS18c (Citrus sinensis (Sweet orange)).